We begin with the raw amino-acid sequence, 379 residues long: Chaperone protein DnaJ (379 aa).

Residues 5 to 69 form the J domain; the sequence is DYYEVLGISK…NKRASYDQFG (65 aa). The CR-type zinc finger occupies 136 to 218; sequence GTTKEISIRK…CHGKGTENKT (83 aa). Zn(2+)-binding residues include C149, C152, C166, C169, C192, C195, C206, and C209. CXXCXGXG motif repeat units follow at residues 149–156, 166–173, 192–199, and 206–213; these read CETCHGDG, CSYCNGAG, CPKCNGSG, and CPTCHGKG.

This sequence belongs to the DnaJ family. Homodimer. It depends on Zn(2+) as a cofactor.

The protein resides in the cytoplasm. Its function is as follows. Participates actively in the response to hyperosmotic and heat shock by preventing the aggregation of stress-denatured proteins and by disaggregating proteins, also in an autonomous, DnaK-independent fashion. Unfolded proteins bind initially to DnaJ; upon interaction with the DnaJ-bound protein, DnaK hydrolyzes its bound ATP, resulting in the formation of a stable complex. GrpE releases ADP from DnaK; ATP binding to DnaK triggers the release of the substrate protein, thus completing the reaction cycle. Several rounds of ATP-dependent interactions between DnaJ, DnaK and GrpE are required for fully efficient folding. Also involved, together with DnaK and GrpE, in the DNA replication of plasmids through activation of initiation proteins. The sequence is that of Chaperone protein DnaJ from Staphylococcus aureus (strain bovine RF122 / ET3-1).